The following is a 354-amino-acid chain: Uroporphyrinogen decarboxylase (354 aa).

Residues 27–31 (RQAGR), Asp77, Tyr154, Thr209, and His327 contribute to the substrate site.

This sequence belongs to the uroporphyrinogen decarboxylase family. Homodimer.

Its subcellular location is the cytoplasm. The enzyme catalyses uroporphyrinogen III + 4 H(+) = coproporphyrinogen III + 4 CO2. Its pathway is porphyrin-containing compound metabolism; protoporphyrin-IX biosynthesis; coproporphyrinogen-III from 5-aminolevulinate: step 4/4. Its function is as follows. Catalyzes the decarboxylation of four acetate groups of uroporphyrinogen-III to yield coproporphyrinogen-III. The protein is Uroporphyrinogen decarboxylase of Pectobacterium atrosepticum (strain SCRI 1043 / ATCC BAA-672) (Erwinia carotovora subsp. atroseptica).